The sequence spans 314 residues: BTB/POZ domain-containing protein KCTD17 (314 aa).

The BTB domain occupies 24-94; the sequence is KWVRLNVGGT…LRHGKLVLDK (71 aa). A disordered region spans residues 190–268; sequence STPNGLSSES…PAGGSRPHPL (79 aa). Residues 196–239 adopt a coiled-coil conformation; it reads SSESSRKTKSTEEQLEEQQQQEEEVEEVEVEQVQVEADAQEKAQ. A compositionally biased stretch (acidic residues) spans 208 to 225; the sequence is EQLEEQQQQEEEVEEVEV.

As to quaternary structure, homopentamer; forms a closed pentamer. Interacts with CUL3; interaction is direct and forms a 5:5 heterodecamer. Interacts with TCHP. Interacts with CUL3, as part of the BCR(KCTD17) E3 ubiquitin ligase complex, at least composed of CUL3, KCTD17 and RBX1. As to expression, highly expressed in brain. Highest expression is observed in the putamen and the thalamus.

It localises to the cytoplasm. In terms of biological role, substrate-adapter for CUL3-RING ubiquitin ligase complexes which mediates the ubiquitination and subsequent proteasomal degradation of TCHP, a protein involved in ciliogenesis down-regulation. Thereby, positively regulates ciliogenesis, playing a crucial role in the initial steps of axoneme extension. May also play a role in endoplasmic reticulum calcium ion homeostasis. The sequence is that of BTB/POZ domain-containing protein KCTD17 from Homo sapiens (Human).